A 239-amino-acid chain; its full sequence is Ribosomal RNA small subunit methyltransferase G (239 aa).

S-adenosyl-L-methionine-binding positions include glycine 77, phenylalanine 82, 128–129 (AE), and arginine 147.

Belongs to the methyltransferase superfamily. RNA methyltransferase RsmG family.

Its subcellular location is the cytoplasm. Specifically methylates the N7 position of guanine in position 535 of 16S rRNA. The chain is Ribosomal RNA small subunit methyltransferase G from Bacillus anthracis (strain A0248).